The sequence spans 257 residues: Isoprenyl transferase (257 aa).

The active site involves Asp-37. Asp-37 is a binding site for Mg(2+). Residues 38–41 (GNGR), Trp-42, Arg-50, His-54, and 82–84 (STE) contribute to the substrate site. Asn-85 (proton acceptor) is an active-site residue. Residues Trp-86, Arg-88, Arg-205, and 211-213 (RLS) each bind substrate. Glu-224 provides a ligand contact to Mg(2+).

It belongs to the UPP synthase family. As to quaternary structure, homodimer. The cofactor is Mg(2+).

In terms of biological role, catalyzes the condensation of isopentenyl diphosphate (IPP) with allylic pyrophosphates generating different type of terpenoids. The protein is Isoprenyl transferase of Shouchella clausii (strain KSM-K16) (Alkalihalobacillus clausii).